A 168-amino-acid chain; its full sequence is Mediator of RNA polymerase II transcription subunit 7a (168 aa).

2 coiled-coil regions span residues 64 to 92 (KDSNLDYKNELRSLNRELQLHILELADVL) and 132 to 166 (IMELQIQQRKQAVEDIKRRREEAQRLLKDAYLTLD).

The protein belongs to the Mediator complex subunit 7 family. In terms of assembly, component of the Mediator complex. Interacts with MEE14/CBP1.

Its subcellular location is the nucleus. Its function is as follows. Component of the Mediator complex, a coactivator involved in the regulated transcription of nearly all RNA polymerase II-dependent genes. Mediator functions as a bridge to convey information from gene-specific regulatory proteins to the basal RNA polymerase II transcription machinery. The Mediator complex, having a compact conformation in its free form, is recruited to promoters by direct interactions with regulatory proteins and serves for the assembly of a functional pre-initiation complex with RNA polymerase II and the general transcription factors. The protein is Mediator of RNA polymerase II transcription subunit 7a (MED7A) of Arabidopsis thaliana (Mouse-ear cress).